Consider the following 228-residue polypeptide: Urease accessory protein UreF (228 aa).

The protein belongs to the UreF family. As to quaternary structure, ureD, UreF and UreG form a complex that acts as a GTP-hydrolysis-dependent molecular chaperone, activating the urease apoprotein by helping to assemble the nickel containing metallocenter of UreC. The UreE protein probably delivers the nickel.

The protein resides in the cytoplasm. Functionally, required for maturation of urease via the functional incorporation of the urease nickel metallocenter. This chain is Urease accessory protein UreF, found in Yersinia enterocolitica serotype O:8 / biotype 1B (strain NCTC 13174 / 8081).